The sequence spans 803 residues: MANPIRKLVDNSKQQLKKLNKIADQVESYADTMASMSDSELQAKTGEFKSKIADAIDGIEDKDKQNKALAKVLDELLPEAFAVAREGAKRVLGLYPFHVQIMGSIVLHGGNLAEMRTGEGKTLTATMAVYLNALSGRGVHVVTVNDYLSARDAEQMGQLYNWLGLTVGVNVGDAPAEEKRAAYNADITYSTNFNIGFDYLRDNMVRRADERVMQRGLNFALIDEADSILIDTARTPLIISGPGSGVSQLYARADRFVKTLQRDEDFKVDEEAKATLLTPEGIHKGEIFFNLNNLYDADDTALTHHIDQALRANFNYIKDKDYVVQDGEVKLIDQSTGRISEGTRLSDGLHQAIEAKENVEIQEENKSMAQITYQNLFRMYKKLSGMTGTAKTEEEELREIYNMEVISIPTNRPVRRVDKPDLLYTSIRAKYNAVVKLIVELHEKGQPILIGTGSVEDSELLSKILMTKNLPHNVLNAKNNAKEAEIIANAGQRGAITVATNMAGRGTDIKLGPGVAELGGLVVIATERHESRRIDNQLRGRAGRQGDEGFSQFFLSLEDDLMIRFGAERVRLMMQRMNLDEDTVITNRFITRSVESAQKRVEGNNYDTRKNVLQYDDVVREQRELIYHERDVVIDESESLEWVLMPMVERTINRVVDAQTKEKKSSDWNLPQIVAFVGNALAHDDAVTVQQLQGLTRDEIKAKLLELAKLNYKEKQSQLYDPEQMLEFEKVVILRAVDQHWTDHIDSLDRLRQGVGLRGYGQLNPLIEYQSEAFANFQKMIADVEYDTTRTFMKAEIRQNLRS.

ATP contacts are provided by residues Gln100, 118 to 122 (GEGKT), and Asp508.

It belongs to the SecA family. Monomer and homodimer. Part of the essential Sec protein translocation apparatus which comprises SecA, SecYEG and auxiliary proteins SecDF. Other proteins may also be involved.

It localises to the cell membrane. The protein resides in the cytoplasm. The catalysed reaction is ATP + H2O + cellular proteinSide 1 = ADP + phosphate + cellular proteinSide 2.. Its function is as follows. Part of the Sec protein translocase complex. Interacts with the SecYEG preprotein conducting channel. Has a central role in coupling the hydrolysis of ATP to the transfer of proteins into and across the cell membrane, serving as an ATP-driven molecular motor driving the stepwise translocation of polypeptide chains across the membrane. The polypeptide is Protein translocase subunit SecA (Leuconostoc mesenteroides subsp. mesenteroides (strain ATCC 8293 / DSM 20343 / BCRC 11652 / CCM 1803 / JCM 6124 / NCDO 523 / NBRC 100496 / NCIMB 8023 / NCTC 12954 / NRRL B-1118 / 37Y)).